The chain runs to 348 residues: DnaJ homolog subfamily B member 5 (348 aa).

Residues 4-68 (DYYKILGIPS…KKRGLYDQYG (65 aa)) enclose the J domain.

The chain is DnaJ homolog subfamily B member 5 (DNAJB5) from Homo sapiens (Human).